The following is a 719-amino-acid chain: MSKIRVYQLAKKLGISNKELIDKLKELSIEVNSHMSTVDNENADVLIELFTEQNKEETKPNVDEKPPNQDTLTDNVNESAESIQNVDKKHFKKEINSTKNVTPNGNNKKDKKKKNKKDKRKNYIANNDVSAESKGEQVIQLKNKLTVKELSETLNKSASEIITKLIGLGIMATINQELDYDTASIIAAEFGIEVEPMTDIDAEEDVFDIIIEPDKPEDLKHRSPVVTVMGHVDHGKTSLLDAIRKTKVTNSEAGGITQHIGASEIKVNDKKIVFLDTPGHEAFTSMRARGAKVTDVAILVVAADDGVMPQTIEAISHAKAAEVPIIVAINKMDKPSANPDRVKQELADQGLLIEEWGGDVISVPVSARSGENIDALLEMVLLVSEMSELKANPNRKAIGTVIEAQLDVGKGPVATVLVQNGTLFIGDSVVIGNTYGRIRAMMNDSGKRVKVAGPSTAVEITGLSEVPEAGDQLFAVDDDKAAKAIVEKRINKIKEEQLKAGQKISLDALFSQMEQGQLKDLNLIIKADTQGSVEAVKQSLVKLSNDEVVINPIHGGVGGITESDVMLATASNAIIIGFNVRPTSNAASAAKKENVDIRTYRIIYKAIEDIEAAMKGMLDPEFVEEELGKAEVRATFKVPGAGTIGGCYVIEGKILRNAKIRLVRDNIVIHEGSIDSLKRFKDDAKEVATGYECGIGISQFNDLKEGDIIEAYHMKEIER.

Basic and acidic residues predominate over residues 54–67 (NKEETKPNVDEKPP). 2 disordered regions span residues 54–75 (NKEE…LTDN) and 97–122 (STKN…KRKN). The segment covering 109 to 122 (KDKKKKNKKDKRKN) has biased composition (basic residues). The tr-type G domain occupies 221–390 (HRSPVVTVMG…LLVSEMSELK (170 aa)). A G1 region spans residues 230–237 (GHVDHGKT). 230–237 (GHVDHGKT) contacts GTP. A G2 region spans residues 255 to 259 (GITQH). The G3 stretch occupies residues 276–279 (DTPG). Residues 276–280 (DTPGH) and 330–333 (NKMD) each bind GTP. The G4 stretch occupies residues 330–333 (NKMD). The G5 stretch occupies residues 366–368 (SAR).

It belongs to the TRAFAC class translation factor GTPase superfamily. Classic translation factor GTPase family. IF-2 subfamily.

The protein localises to the cytoplasm. In terms of biological role, one of the essential components for the initiation of protein synthesis. Protects formylmethionyl-tRNA from spontaneous hydrolysis and promotes its binding to the 30S ribosomal subunits. Also involved in the hydrolysis of GTP during the formation of the 70S ribosomal complex. This Alkaliphilus oremlandii (strain OhILAs) (Clostridium oremlandii (strain OhILAs)) protein is Translation initiation factor IF-2.